The following is a 270-amino-acid chain: NAD kinase (270 aa).

The Proton acceptor role is filled by Asp-62. Residues 62 to 63 (DG), Arg-67, 129 to 130 (ND), Lys-140, Asp-159, Ile-167, 170 to 175 (TSYSFS), Ala-194, and Gln-227 contribute to the NAD(+) site.

It belongs to the NAD kinase family. It depends on a divalent metal cation as a cofactor.

Its subcellular location is the cytoplasm. The catalysed reaction is NAD(+) + ATP = ADP + NADP(+) + H(+). Involved in the regulation of the intracellular balance of NAD and NADP, and is a key enzyme in the biosynthesis of NADP. Catalyzes specifically the phosphorylation on 2'-hydroxyl of the adenosine moiety of NAD to yield NADP. The protein is NAD kinase of Picrophilus torridus (strain ATCC 700027 / DSM 9790 / JCM 10055 / NBRC 100828 / KAW 2/3).